A 405-amino-acid chain; its full sequence is MKSSKNDTFVYRTWVKTLVVYFVMFVMSAVVPITAMFPNLGYPCYFNALVDYGALNLTNYNLAHHLTPTLYLEPPEMFVYITLVFIADCVAFIYYACGEVALIKARKKVSGLTDLSAWVSAVGSPTVLFLAILKLWSIQVFIQVLSYKHVFLSAFVYFLHFLASVLHACACVTRFSPVWVVKAQDNSIPQDTFLWWVVFYLKPVVTNLYLGCLALETLVFSLSVFLALGNSFYFMVGDMVLGAVNLFLILPIFWYILTEVWLASFMRHNFGFYCGMFIASIILILPLVRYEAVFVSAKLHTTVAINVAIIPILCSVAMLIRICRIFKSMRQGTDYVPVSETVELELESEPRPRPSRTPSPGRNRRRSSTSSSSSRSTRRQRPVSTQALVSSVLPMTTDSEEEIFP.

Topologically, residues 1–17 (MKSSKNDTFVYRTWVKT) are intravirion. A helical membrane pass occupies residues 18–38 (LVVYFVMFVMSAVVPITAMFP). Topologically, residues 39–76 (NLGYPCYFNALVDYGALNLTNYNLAHHLTPTLYLEPPE) are virion surface. The chain crosses the membrane as a helical span at residues 77 to 97 (MFVYITLVFIADCVAFIYYAC). Over 98 to 121 (GEVALIKARKKVSGLTDLSAWVSA) the chain is Intravirion. A helical transmembrane segment spans residues 122-142 (VGSPTVLFLAILKLWSIQVFI). Residues 143-149 (QVLSYKH) lie on the Virion surface side of the membrane. Residues 150–170 (VFLSAFVYFLHFLASVLHACA) traverse the membrane as a helical segment. Residues 171–192 (CVTRFSPVWVVKAQDNSIPQDT) lie on the Intravirion side of the membrane. Residues 193–215 (FLWWVVFYLKPVVTNLYLGCLAL) form a helical membrane-spanning segment. Residues 216–245 (ETLVFSLSVFLALGNSFYFMVGDMVLGAVN) lie on the Virion surface side of the membrane. A helical membrane pass occupies residues 246 to 266 (LFLILPIFWYILTEVWLASFM). Position 267 (R267) is a topological domain, intravirion. Residues 268–288 (HNFGFYCGMFIASIILILPLV) form a helical membrane-spanning segment. Topologically, residues 289 to 299 (RYEAVFVSAKL) are virion surface. A helical transmembrane segment spans residues 300 to 320 (HTTVAINVAIIPILCSVAMLI). The Intravirion portion of the chain corresponds to 321–405 (RICRIFKSMR…TTDSEEEIFP (85 aa)). Positions 346-405 (LESEPRPRPSRTPSPGRNRRRSSTSSSSSRSTRRQRPVSTQALVSSVLPMTTDSEEEIFP) are disordered. The segment covering 386–397 (QALVSSVLPMTT) has biased composition (polar residues).

The protein belongs to the herpesviridae glycoprotein M family. As to quaternary structure, interacts (via N-terminus) with gN (via N-terminus). The gM-gN heterodimer forms the gCII complex.

It is found in the virion membrane. It localises to the host Golgi apparatus. Its subcellular location is the host trans-Golgi network. The protein localises to the host endosome membrane. The protein resides in the host nucleus inner membrane. Its function is as follows. Envelope glycoprotein important for virion assembly and egress. Plays a role in the correct incorporation of gH-gL into virion membrane. Directs the glycoprotein N (gN) to the host trans-Golgi network. The chain is Envelope glycoprotein M from Epstein-Barr virus (strain GD1) (HHV-4).